Consider the following 337-residue polypeptide: Fructose-1,6-bisphosphatase class 1 (337 aa).

The Mg(2+) site is built by E89, D112, L114, and D115. Residues 115–118 (DGSS), N208, Y241, and K271 each bind substrate. Position 277 (E277) interacts with Mg(2+).

The protein belongs to the FBPase class 1 family. As to quaternary structure, homotetramer. Mg(2+) serves as cofactor.

Its subcellular location is the cytoplasm. It carries out the reaction beta-D-fructose 1,6-bisphosphate + H2O = beta-D-fructose 6-phosphate + phosphate. It participates in carbohydrate biosynthesis; gluconeogenesis. The protein is Fructose-1,6-bisphosphatase class 1 of Yersinia pestis bv. Antiqua (strain Antiqua).